The primary structure comprises 120 residues: MARIAGVNIPNHAHAVIGLQAIFGVGQTRAQQICAAASVNPSTKVKDLTEAEMEALRDQVAKFTVEGDLRREITMSIKRLMDMGCYRGFRHRRGLPCRGQRTRTNARTRKGPRKAIAGKK.

Residues 96–120 (PCRGQRTRTNARTRKGPRKAIAGKK) are disordered.

This sequence belongs to the universal ribosomal protein uS13 family. As to quaternary structure, part of the 30S ribosomal subunit. Forms a loose heterodimer with protein S19. Forms two bridges to the 50S subunit in the 70S ribosome.

Its function is as follows. Located at the top of the head of the 30S subunit, it contacts several helices of the 16S rRNA. In the 70S ribosome it contacts the 23S rRNA (bridge B1a) and protein L5 of the 50S subunit (bridge B1b), connecting the 2 subunits; these bridges are implicated in subunit movement. Contacts the tRNAs in the A and P-sites. The chain is Small ribosomal subunit protein uS13 from Chromobacterium violaceum (strain ATCC 12472 / DSM 30191 / JCM 1249 / CCUG 213 / NBRC 12614 / NCIMB 9131 / NCTC 9757 / MK).